The primary structure comprises 205 residues: Dephospho-CoA kinase (205 aa).

The 199-residue stretch at 7 to 205 folds into the DPCK domain; it reads IIGVTGRIAS…QGIINYERFE (199 aa). Residue 15-20 coordinates ATP; that stretch reads ASGKDT.

The protein belongs to the CoaE family.

The protein localises to the cytoplasm. The enzyme catalyses 3'-dephospho-CoA + ATP = ADP + CoA + H(+). It functions in the pathway cofactor biosynthesis; coenzyme A biosynthesis; CoA from (R)-pantothenate: step 5/5. In terms of biological role, catalyzes the phosphorylation of the 3'-hydroxyl group of dephosphocoenzyme A to form coenzyme A. The chain is Dephospho-CoA kinase from Borreliella burgdorferi (strain ATCC 35210 / DSM 4680 / CIP 102532 / B31) (Borrelia burgdorferi).